We begin with the raw amino-acid sequence, 417 residues long: Gamma-glutamyl phosphate reductase (417 aa).

The protein belongs to the gamma-glutamyl phosphate reductase family.

The protein resides in the cytoplasm. The enzyme catalyses L-glutamate 5-semialdehyde + phosphate + NADP(+) = L-glutamyl 5-phosphate + NADPH + H(+). It functions in the pathway amino-acid biosynthesis; L-proline biosynthesis; L-glutamate 5-semialdehyde from L-glutamate: step 2/2. In terms of biological role, catalyzes the NADPH-dependent reduction of L-glutamate 5-phosphate into L-glutamate 5-semialdehyde and phosphate. The product spontaneously undergoes cyclization to form 1-pyrroline-5-carboxylate. The protein is Gamma-glutamyl phosphate reductase of Escherichia coli O81 (strain ED1a).